The sequence spans 156 residues: Small ribosomal subunit protein uS7 (156 aa).

It belongs to the universal ribosomal protein uS7 family. Part of the 30S ribosomal subunit. Contacts proteins S9 and S11.

Functionally, one of the primary rRNA binding proteins, it binds directly to 16S rRNA where it nucleates assembly of the head domain of the 30S subunit. Is located at the subunit interface close to the decoding center, probably blocks exit of the E-site tRNA. The chain is Small ribosomal subunit protein uS7 from Bradyrhizobium diazoefficiens (strain JCM 10833 / BCRC 13528 / IAM 13628 / NBRC 14792 / USDA 110).